Here is a 291-residue protein sequence, read N- to C-terminus: Putative transport permease ycf38 (291 aa).

6 helical membrane passes run A47–F67, S87–F107, F135–G155, L165–L185, L195–P215, and I262–V282. Positions A47–R289 constitute an ABC transmembrane type-2 domain.

It belongs to the ABC-2 integral membrane protein family.

It is found in the plastid. Its subcellular location is the chloroplast membrane. In Porphyra purpurea (Red seaweed), this protein is Putative transport permease ycf38 (ycf38).